Here is a 293-residue protein sequence, read N- to C-terminus: SAGA-associated factor 29 (293 aa).

Positions Leu3–Lys88 form a coiled coil. In terms of domain architecture, SGF29 C-terminal spans Gly152–Lys293. Histone H3K4me3 N-terminus binding regions lie at residues Asp194–Asp196 and Gln240–Cys243. The histone H3K4me3 binding stretch occupies residues Phe264–Asp266. An N6-acetyllysine modification is found at Lys288.

It belongs to the SGF29 family. Interacts with dimethylated and trimethylated 'Lys-4' of histone H3 (H3K4me2 and H3K4me3), with a preference for the trimethylated form (H3K4me3). Component of some SAGA-type complexes. Component of the ADA2A-containing complex (ATAC), composed of KAT14, KAT2A, TADA2L, TADA3L, ZZ3, MBIP, WDR5, YEATS2, CCDC101 and DR1. Interacts with (methylated) CGAS. Interacts with TADA3L, GCN5L2, SUPT3H and MYC.

The protein resides in the nucleus. In terms of biological role, chromatin reader component of some histone acetyltransferase (HAT) SAGA-type complexes like the TFTC-HAT, ATAC or STAGA complexes. SGF29 specifically recognizes and binds methylated 'Lys-4' of histone H3 (H3K4me), with a preference for trimethylated form (H3K4me3). In the SAGA-type complexes, SGF29 is required to recruit complexes to H3K4me. Involved in the response to endoplasmic reticulum (ER) stress by recruiting the SAGA complex to H3K4me, thereby promoting histone H3 acetylation and cell survival. Also binds non-histone proteins that are methylated on Lys residues: specifically recognizes and binds CGAS monomethylated on 'Lys-506'. This Homo sapiens (Human) protein is SAGA-associated factor 29.